Here is a 376-residue protein sequence, read N- to C-terminus: Succinate--CoA ligase [ADP-forming] subunit beta (376 aa).

The ATP-grasp domain occupies 9–237 (KEIFSKYGIP…PTEEEKVEAD (229 aa)). ATP is bound by residues Lys-46, 53–55 (GRG), Val-95, and Glu-100. Mg(2+)-binding residues include Asn-192 and Asp-206. Substrate-binding positions include Asn-257 and 314–316 (GIT).

This sequence belongs to the succinate/malate CoA ligase beta subunit family. In terms of assembly, heterotetramer of two alpha and two beta subunits. The cofactor is Mg(2+).

It catalyses the reaction succinate + ATP + CoA = succinyl-CoA + ADP + phosphate. The catalysed reaction is GTP + succinate + CoA = succinyl-CoA + GDP + phosphate. The protein operates within carbohydrate metabolism; tricarboxylic acid cycle; succinate from succinyl-CoA (ligase route): step 1/1. Succinyl-CoA synthetase functions in the citric acid cycle (TCA), coupling the hydrolysis of succinyl-CoA to the synthesis of either ATP or GTP and thus represents the only step of substrate-level phosphorylation in the TCA. The beta subunit provides nucleotide specificity of the enzyme and binds the substrate succinate, while the binding sites for coenzyme A and phosphate are found in the alpha subunit. The sequence is that of Succinate--CoA ligase [ADP-forming] subunit beta from Bacteroides thetaiotaomicron (strain ATCC 29148 / DSM 2079 / JCM 5827 / CCUG 10774 / NCTC 10582 / VPI-5482 / E50).